The chain runs to 296 residues: Release factor glutamine methyltransferase (296 aa).

Residues 133–137 (GTGSG), D156, and N201 contribute to the S-adenosyl-L-methionine site. Residue 201-204 (NPPY) coordinates substrate.

This sequence belongs to the protein N5-glutamine methyltransferase family. PrmC subfamily.

It catalyses the reaction L-glutaminyl-[peptide chain release factor] + S-adenosyl-L-methionine = N(5)-methyl-L-glutaminyl-[peptide chain release factor] + S-adenosyl-L-homocysteine + H(+). Functionally, methylates the class 1 translation termination release factors RF1/PrfA and RF2/PrfB on the glutamine residue of the universally conserved GGQ motif. This is Release factor glutamine methyltransferase from Rhodopirellula baltica (strain DSM 10527 / NCIMB 13988 / SH1).